The primary structure comprises 312 residues: Glyoxylate/hydroxypyruvate reductase A (312 aa).

Residue R227 is part of the active site. H275 serves as the catalytic Proton donor.

It belongs to the D-isomer specific 2-hydroxyacid dehydrogenase family. GhrA subfamily.

It localises to the cytoplasm. The catalysed reaction is glycolate + NADP(+) = glyoxylate + NADPH + H(+). It catalyses the reaction (R)-glycerate + NAD(+) = 3-hydroxypyruvate + NADH + H(+). It carries out the reaction (R)-glycerate + NADP(+) = 3-hydroxypyruvate + NADPH + H(+). Its function is as follows. Catalyzes the NADPH-dependent reduction of glyoxylate and hydroxypyruvate into glycolate and glycerate, respectively. Inactive towards 2-oxo-D-gluconate, 2-oxoglutarate, oxaloacetate and pyruvate. Only D- and L-glycerate are involved in the oxidative activity with NADP. Activity with NAD is very low. This is Glyoxylate/hydroxypyruvate reductase A (ghrA) from Escherichia coli (strain K12).